Here is a 313-residue protein sequence, read N- to C-terminus: UDP-N-acetylglucosamine 3-dehydrogenase (313 aa).

NAD(+) contacts are provided by histidine 13, leucine 14, and arginine 38.

It belongs to the Gfo/Idh/MocA family. As to quaternary structure, exists in multiple oligomeric states.

The enzyme catalyses UDP-N-acetyl-alpha-D-glucosamine + NAD(+) = UDP-2-acetamido-3-dehydro-2-deoxy-alpha-D-glucopyranose + NADH + H(+). It functions in the pathway bacterial outer membrane biogenesis; LPS lipid A biosynthesis. Its function is as follows. Oxidoreductase involved in the synthesis of 2,3-diamino-2,3-dideoxy-D-glucopyranose (GlcN3N), which is a component of lipid A in some species. Catalyzes the NAD(+)-dependent oxidation of the glucosamine 3-position of UDP-N-acetyl-glucosamine (UDP-GlcNAc) to a ketone moiety, forming UDP-2-acetamido-3-dehydro-2-deoxy-alpha-D-glucopyranose (UDP-3-oxo-GlcNAc). Is specific for UDP-GlcNAc, no activity is observed with UDP-glucose (UDP-Glc), UDP-glucoronic acid (UDP-GlcA), UDP-galactose (UDP-Gal) and UDP-N-acetylgalactosamine (UDP-GalNAc). Cannot use FAD(+) and NADP(+). The chain is UDP-N-acetylglucosamine 3-dehydrogenase from Acidithiobacillus ferrooxidans (strain ATCC 23270 / DSM 14882 / CIP 104768 / NCIMB 8455) (Ferrobacillus ferrooxidans (strain ATCC 23270)).